Consider the following 457-residue polypeptide: Autophagy-related protein 14 (457 aa).

Positions 31–109 (RIENVMALIE…TRRAALSRRK (79 aa)) form a coiled coil. Disordered regions lie at residues 54–73 (ETNAPTKDRKDALQAQQRTA), 252–274 (PSQASVSSPSSTTDTESQRVSRP), and 433–457 (NKNLLMGDKSSPRRGTSGWMRVKNR). Low complexity predominate over residues 253–266 (SQASVSSPSSTTDT).

The protein belongs to the ATG14 family. In terms of assembly, component of the autophagy-specific VPS34 PI3-kinase complex I.

The protein localises to the preautophagosomal structure membrane. The protein resides in the vacuole membrane. In terms of biological role, required for cytoplasm to vacuole transport (Cvt) and autophagy as a part of the autophagy-specific VPS34 PI3-kinase complex I. This complex is essential to recruit the ATG8-phosphatidylinositol conjugate and the ATG12-ATG5 conjugate to the pre-autophagosomal structure. ATG14 mediates the specific binding of the VPS34 PI3-kinase complex I to the preautophagosomal structure (PAS). Autophagy is required for proper vegetative growth, asexual/sexual reproduction, and full virulence. Autophagy is particularly involved in the biosynthesis of deoxynivalenol (DON), an important virulence determinant. The polypeptide is Autophagy-related protein 14 (Gibberella zeae (strain ATCC MYA-4620 / CBS 123657 / FGSC 9075 / NRRL 31084 / PH-1) (Wheat head blight fungus)).